The sequence spans 406 residues: Probable UDP-arabinose 4-epimerase 3 (406 aa).

Residues 1–26 are Cytoplasmic-facing; that stretch reads MIPLNRRASQTRGGMEYFDARRKPHN. The chain crosses the membrane as a helical; Signal-anchor for type II membrane protein span at residues 27–44; the sequence is VGKVIAALVLTTLCIFIL. The Lumenal segment spans residues 45–406; the sequence is KQSPGFGGSS…KSHPRGYGSN (362 aa). 65-96 is an NAD(+) binding site; sequence HVLVTGGAGYIGSHASLRLLKDNYRVTIVDNL. Catalysis depends on Y213, which acts as the Proton acceptor.

It belongs to the NAD(P)-dependent epimerase/dehydratase family. It depends on NAD(+) as a cofactor.

The protein resides in the golgi apparatus. It localises to the golgi stack membrane. It catalyses the reaction UDP-beta-L-arabinopyranose = UDP-alpha-D-xylose. The protein operates within nucleotide-sugar biosynthesis; UDP-L-arabinose biosynthesis; UDP-L-arabinose from UDP-alpha-D-xylose: step 1/1. It functions in the pathway cell wall biogenesis; cell wall polysaccharide biosynthesis. In Oryza sativa subsp. japonica (Rice), this protein is Probable UDP-arabinose 4-epimerase 3 (UEL-3).